The primary structure comprises 554 residues: Dihydroxy-acid dehydratase (554 aa).

Asp-78 contributes to the Mg(2+) binding site. Cys-119 provides a ligand contact to [2Fe-2S] cluster. Mg(2+) is bound by residues Asp-120 and Lys-121. Lys-121 is subject to N6-carboxylysine. Residue Cys-191 coordinates [2Fe-2S] cluster. Glu-442 contributes to the Mg(2+) binding site. Ser-468 serves as the catalytic Proton acceptor.

Belongs to the IlvD/Edd family. Homodimer. Requires [2Fe-2S] cluster as cofactor. Mg(2+) serves as cofactor.

The catalysed reaction is (2R)-2,3-dihydroxy-3-methylbutanoate = 3-methyl-2-oxobutanoate + H2O. It catalyses the reaction (2R,3R)-2,3-dihydroxy-3-methylpentanoate = (S)-3-methyl-2-oxopentanoate + H2O. The protein operates within amino-acid biosynthesis; L-isoleucine biosynthesis; L-isoleucine from 2-oxobutanoate: step 3/4. Its pathway is amino-acid biosynthesis; L-valine biosynthesis; L-valine from pyruvate: step 3/4. Functions in the biosynthesis of branched-chain amino acids. Catalyzes the dehydration of (2R,3R)-2,3-dihydroxy-3-methylpentanoate (2,3-dihydroxy-3-methylvalerate) into 2-oxo-3-methylpentanoate (2-oxo-3-methylvalerate) and of (2R)-2,3-dihydroxy-3-methylbutanoate (2,3-dihydroxyisovalerate) into 2-oxo-3-methylbutanoate (2-oxoisovalerate), the penultimate precursor to L-isoleucine and L-valine, respectively. In Thermotoga petrophila (strain ATCC BAA-488 / DSM 13995 / JCM 10881 / RKU-1), this protein is Dihydroxy-acid dehydratase.